The sequence spans 343 residues: UPF0284 protein Msed_0735 (343 aa).

Belongs to the UPF0284 family.

This is UPF0284 protein Msed_0735 from Metallosphaera sedula (strain ATCC 51363 / DSM 5348 / JCM 9185 / NBRC 15509 / TH2).